Reading from the N-terminus, the 155-residue chain is Ribosomal RNA large subunit methyltransferase H (155 aa).

S-adenosyl-L-methionine-binding positions include Leu-72, Gly-103, and 122-127 (LSPLTL).

Belongs to the RNA methyltransferase RlmH family. As to quaternary structure, homodimer.

The protein resides in the cytoplasm. The catalysed reaction is pseudouridine(1915) in 23S rRNA + S-adenosyl-L-methionine = N(3)-methylpseudouridine(1915) in 23S rRNA + S-adenosyl-L-homocysteine + H(+). In terms of biological role, specifically methylates the pseudouridine at position 1915 (m3Psi1915) in 23S rRNA. The chain is Ribosomal RNA large subunit methyltransferase H from Actinobacillus pleuropneumoniae serotype 3 (strain JL03).